Consider the following 151-residue polypeptide: Small ribosomal subunit protein uS15 (151 aa).

At lysine 27 the chain carries N6-acetyllysine; alternate. Position 27 is an N6-succinyllysine; alternate (lysine 27). Lysine 27 is covalently cross-linked (Glycyl lysine isopeptide (Lys-Gly) (interchain with G-Cter in ubiquitin)). Serine 30 is subject to Phosphoserine. Lysine 34 is modified (N6-succinyllysine). Tyrosine 38 is modified (phosphotyrosine). Residue lysine 43 forms a Glycyl lysine isopeptide (Lys-Gly) (interchain with G-Cter in SUMO2) linkage.

The protein belongs to the universal ribosomal protein uS15 family. In terms of assembly, component of the small ribosomal subunit. Part of the small subunit (SSU) processome, composed of more than 70 proteins and the RNA chaperone small nucleolar RNA (snoRNA) U3. Ubiquitinated at Lys-27 by RNF14 and RNF25 in response to ribosome collisions (ribosome stalling).

The protein localises to the cytoplasm. Its subcellular location is the nucleus. It localises to the nucleolus. Component of the small ribosomal subunit. The ribosome is a large ribonucleoprotein complex responsible for the synthesis of proteins in the cell. Part of the small subunit (SSU) processome, first precursor of the small eukaryotic ribosomal subunit. During the assembly of the SSU processome in the nucleolus, many ribosome biogenesis factors, an RNA chaperone and ribosomal proteins associate with the nascent pre-rRNA and work in concert to generate RNA folding, modifications, rearrangements and cleavage as well as targeted degradation of pre-ribosomal RNA by the RNA exosome. This Homo sapiens (Human) protein is Small ribosomal subunit protein uS15.